The primary structure comprises 186 residues: ATP synthase subunit delta (186 aa).

The protein belongs to the ATPase delta chain family. In terms of assembly, F-type ATPases have 2 components, F(1) - the catalytic core - and F(0) - the membrane proton channel. F(1) has five subunits: alpha(3), beta(3), gamma(1), delta(1), epsilon(1). CF(0) has four main subunits: a(1), b(1), b'(1) and c(10-14). The alpha and beta chains form an alternating ring which encloses part of the gamma chain. F(1) is attached to F(0) by a central stalk formed by the gamma and epsilon chains, while a peripheral stalk is formed by the delta, b and b' chains.

It localises to the cell inner membrane. In terms of biological role, f(1)F(0) ATP synthase produces ATP from ADP in the presence of a proton or sodium gradient. F-type ATPases consist of two structural domains, F(1) containing the extramembraneous catalytic core and F(0) containing the membrane proton channel, linked together by a central stalk and a peripheral stalk. During catalysis, ATP synthesis in the catalytic domain of F(1) is coupled via a rotary mechanism of the central stalk subunits to proton translocation. Functionally, this protein is part of the stalk that links CF(0) to CF(1). It either transmits conformational changes from CF(0) to CF(1) or is implicated in proton conduction. The protein is ATP synthase subunit delta of Rhodospirillum centenum (strain ATCC 51521 / SW).